Here is a 201-residue protein sequence, read N- to C-terminus: Probable nicotinate-nucleotide adenylyltransferase (201 aa).

It belongs to the NadD family.

The catalysed reaction is nicotinate beta-D-ribonucleotide + ATP + H(+) = deamido-NAD(+) + diphosphate. The protein operates within cofactor biosynthesis; NAD(+) biosynthesis; deamido-NAD(+) from nicotinate D-ribonucleotide: step 1/1. Its function is as follows. Catalyzes the reversible adenylation of nicotinate mononucleotide (NaMN) to nicotinic acid adenine dinucleotide (NaAD). In Neisseria meningitidis serogroup C / serotype 2a (strain ATCC 700532 / DSM 15464 / FAM18), this protein is Probable nicotinate-nucleotide adenylyltransferase.